A 459-amino-acid chain; its full sequence is MQIQFHLYNTLSRTKEVFNPQDQANVKMYVCGPTVYYNPHIGNSRSGVVYDLLYRIVIKIFGEKAVKYVRNITDVDDKIIDRAALLGVTIDELTDKVTKEFHKNMAYLGCMLPSIEPKATKHIDVMIAIIERLIAKDHAYIADNHVYFDVLSAPNYTELSNRNLEEMFEGVHVENSKTKKNPQDFVLWKPAKQNESANMNFESPWGLGRPGWHIECSAMSYKYLGENFDIHGGGADLIFPHHTNEIAQSRCAFPSSTYAKYWVHNGFLTVNGEKMSKSLGNFITVRDLMDKQIQGEVVRLFLLSSHYRRPLDYNDKAIEDAKKTLDYWYRAIENINVQKIDLPHDFMQSLLDDMNTPLAVKIINDYAKGVFISKTEEERQLNASAIITCANFIGLMNKTPHEWFNSGVDELYINELVNKRLEAKKQKNWLLADQIRNQLLEEKIILEDQPDGTTIWRKE.

Residue C31 coordinates Zn(2+). The 'HIGH' region signature appears at 33-43 (PTVYYNPHIGN). Positions 216, 241, and 245 each coordinate Zn(2+). The 'KMSKS' region motif lies at 274–278 (KMSKS). K277 contacts ATP.

It belongs to the class-I aminoacyl-tRNA synthetase family. As to quaternary structure, monomer. It depends on Zn(2+) as a cofactor.

The protein localises to the cytoplasm. It carries out the reaction tRNA(Cys) + L-cysteine + ATP = L-cysteinyl-tRNA(Cys) + AMP + diphosphate. The chain is Cysteine--tRNA ligase from Rickettsia peacockii (strain Rustic).